Reading from the N-terminus, the 264-residue chain is 3-methyl-2-oxobutanoate hydroxymethyltransferase (264 aa).

2 residues coordinate Mg(2+): aspartate 45 and aspartate 84. 3-methyl-2-oxobutanoate contacts are provided by residues 45 to 46, aspartate 84, and lysine 112; that span reads DS. Residue glutamate 114 coordinates Mg(2+). The active-site Proton acceptor is the glutamate 181.

It belongs to the PanB family. Homodecamer; pentamer of dimers. Requires Mg(2+) as cofactor.

The protein resides in the cytoplasm. The catalysed reaction is 3-methyl-2-oxobutanoate + (6R)-5,10-methylene-5,6,7,8-tetrahydrofolate + H2O = 2-dehydropantoate + (6S)-5,6,7,8-tetrahydrofolate. It functions in the pathway cofactor biosynthesis; (R)-pantothenate biosynthesis; (R)-pantoate from 3-methyl-2-oxobutanoate: step 1/2. Catalyzes the reversible reaction in which hydroxymethyl group from 5,10-methylenetetrahydrofolate is transferred onto alpha-ketoisovalerate to form ketopantoate. In Vibrio atlanticus (strain LGP32) (Vibrio splendidus (strain Mel32)), this protein is 3-methyl-2-oxobutanoate hydroxymethyltransferase.